An 801-amino-acid polypeptide reads, in one-letter code: Phosphorus acquisition-controlling protein (801 aa).

Disordered regions lie at residues 292–317 (GSSPREMELEPPAMSQASVSPGDLAR), 366–607 (APSQ…SAGA), 628–725 (NTVP…ASTV), and 756–801 (MKMQ…AMDE). Over residues 374 to 386 (PLTPLIPTSSSST) the composition is skewed to low complexity. 2 stretches are compositionally biased toward polar residues: residues 387–401 (AGVTDSENGSISPEN) and 459–472 (KLSSPSNRNPSVVG). The segment at 446–540 (PGIASPATPA…PPSPAVAKPL (95 aa)) is interaction with negative regulatory factor. Over residues 477–486 (DPMDPDHIEN) the composition is skewed to basic and acidic residues. Positions 535 to 554 (AVAKPLALPSAALSSPQLKP) are enriched in low complexity. Residues 637-646 (SELSTNLTSK) are compositionally biased toward polar residues. The region spanning 645-735 (SKRTSHKIAE…EMAIEYIKQL (91 aa)) is the bHLH domain. Positions 676 to 687 (PAKEGGDGDGDG) are enriched in basic and acidic residues. Residues 690–699 (SSGGGGGSGG) are compositionally biased toward gly residues. Residues 700–713 (ADREDKREKDKDKA) show a composition bias toward basic and acidic residues. The segment covering 765–777 (GSGSSVGDAGDLG) has biased composition (low complexity).

Binds DNA as a dimer.

The protein localises to the nucleus. Functionally, factor that activates the transcription of structural genes for phosphorus acquisition. This chain is Phosphorus acquisition-controlling protein (nuc-1), found in Neurospora crassa (strain ATCC 24698 / 74-OR23-1A / CBS 708.71 / DSM 1257 / FGSC 987).